Reading from the N-terminus, the 218-residue chain is 3,4-dihydroxy-2-butanone 4-phosphate synthase (218 aa).

D-ribulose 5-phosphate contacts are provided by residues Arg-38–Glu-39, Asp-43, Arg-151–Thr-155, and Glu-175. Glu-39 provides a ligand contact to Mg(2+). His-154 is a Mg(2+) binding site.

It belongs to the DHBP synthase family. Homodimer. The cofactor is Mg(2+). Mn(2+) serves as cofactor.

It catalyses the reaction D-ribulose 5-phosphate = (2S)-2-hydroxy-3-oxobutyl phosphate + formate + H(+). It functions in the pathway cofactor biosynthesis; riboflavin biosynthesis; 2-hydroxy-3-oxobutyl phosphate from D-ribulose 5-phosphate: step 1/1. Its function is as follows. Catalyzes the conversion of D-ribulose 5-phosphate to formate and 3,4-dihydroxy-2-butanone 4-phosphate. The chain is 3,4-dihydroxy-2-butanone 4-phosphate synthase from Vibrio vulnificus (strain CMCP6).